Reading from the N-terminus, the 642-residue chain is Probable glutamate--tRNA ligase, cytoplasmic (642 aa).

152–154 is an L-glutamate binding site; sequence RFP. The 'HIGH' region signature appears at 157-166; sequence PNGRLHIGHA. An ATP-binding site is contributed by His162. L-glutamate-binding positions include Asp188, 326-330, and Arg344; that span reads YDFAC. Residues Glu347 and 382–386 each bind ATP; that span reads VLSKR. The short motif at 382–386 is the 'KMSKS' region element; the sequence is VLSKR.

It belongs to the class-I aminoacyl-tRNA synthetase family. Glutamate--tRNA ligase type 2 subfamily.

The protein localises to the cytoplasm. The enzyme catalyses tRNA(Glu) + L-glutamate + ATP = L-glutamyl-tRNA(Glu) + AMP + diphosphate. The chain is Probable glutamate--tRNA ligase, cytoplasmic from Encephalitozoon cuniculi (strain GB-M1) (Microsporidian parasite).